We begin with the raw amino-acid sequence, 380 residues long: Cytochrome b (380 aa).

Helical transmembrane passes span 34 to 54 (FGSL…FLAM), 78 to 99 (WLLR…YFHI), 114 to 134 (WNIG…GYVL), and 179 to 199 (FFTF…INLL). Heme b is bound by residues His-84 and His-98. His-183 is a heme b binding site. His-202 provides a ligand contact to a ubiquinone. Helical transmembrane passes span 227–247 (YKDL…STFA), 289–309 (LGGV…PIIH), 321–341 (IAKT…WIGG), and 348–368 (FITI…LLIP).

The protein belongs to the cytochrome b family. The cytochrome bc1 complex contains 3 respiratory subunits (MT-CYB, CYC1 and UQCRFS1), 2 core proteins (UQCRC1 and UQCRC2) and probably 6 low-molecular weight proteins. Heme b is required as a cofactor.

It is found in the mitochondrion inner membrane. In terms of biological role, component of the ubiquinol-cytochrome c reductase complex (complex III or cytochrome b-c1 complex) that is part of the mitochondrial respiratory chain. The b-c1 complex mediates electron transfer from ubiquinol to cytochrome c. Contributes to the generation of a proton gradient across the mitochondrial membrane that is then used for ATP synthesis. This is Cytochrome b (mt-cyb) from Pelophylax plancyi (Korean pond frog).